The sequence spans 111 residues: Cornifelin homolog A (111 aa).

Belongs to the cornifelin family.

The sequence is that of Cornifelin homolog A (cnfn-a) from Xenopus laevis (African clawed frog).